Reading from the N-terminus, the 85-residue chain is Conotoxin Lt28.2 (85 aa).

A signal peptide spans 1–21 (MPKLEMMLLVLLILPLCYIDA). The propeptide occupies 22–40 (VGPPPPWNMEDEIIEHWQK).

Belongs to the conotoxin D superfamily. In terms of processing, contains 5 disulfide bonds. In terms of tissue distribution, expressed by the venom duct.

It localises to the secreted. Its function is as follows. Probable neurotoxin. The sequence is that of Conotoxin Lt28.2 from Conus litteratus (Lettered cone).